Reading from the N-terminus, the 74-residue chain is Large ribosomal subunit protein bL28 (74 aa).

It belongs to the bacterial ribosomal protein bL28 family.

This Desulforapulum autotrophicum (strain ATCC 43914 / DSM 3382 / VKM B-1955 / HRM2) (Desulfobacterium autotrophicum) protein is Large ribosomal subunit protein bL28.